Consider the following 192-residue polypeptide: AFELPSLPYAIDALEPHISKETLEFHHGKHHNTYVVKLNGLIPGTKFENKSLEEIVCSSDGGVFNNAAQIWNHTFYWNSLSPNGGGAPTGAVADAINAKWGSFDAFKEALNDKAVNNFGSSWTWLVKLADGSLDIVNTSNAATPLTDDGVTPILTVDLWEHAYYIDYRNVRPDYLKGFWSLVNWEFANANFA.

Fe cation is bound by residues His26, His73, Asp157, and His161.

Belongs to the iron/manganese superoxide dismutase family. As to quaternary structure, homodimer. It depends on Fe cation as a cofactor.

It catalyses the reaction 2 superoxide + 2 H(+) = H2O2 + O2. Functionally, destroys superoxide anion radicals which are normally produced within the cells and which are toxic to biological systems. The sequence is that of Superoxide dismutase [Fe] from Pseudoalteromonas translucida (strain TAC 125).